We begin with the raw amino-acid sequence, 308 residues long: Aspartate carbamoyltransferase catalytic subunit (308 aa).

Residues R58 and T59 each coordinate carbamoyl phosphate. K86 is an L-aspartate binding site. Positions 108, 136, and 139 each coordinate carbamoyl phosphate. Positions 169 and 227 each coordinate L-aspartate. Carbamoyl phosphate-binding residues include G268 and P269.

Belongs to the aspartate/ornithine carbamoyltransferase superfamily. ATCase family. Heterododecamer (2C3:3R2) of six catalytic PyrB chains organized as two trimers (C3), and six regulatory PyrI chains organized as three dimers (R2).

It carries out the reaction carbamoyl phosphate + L-aspartate = N-carbamoyl-L-aspartate + phosphate + H(+). Its pathway is pyrimidine metabolism; UMP biosynthesis via de novo pathway; (S)-dihydroorotate from bicarbonate: step 2/3. Functionally, catalyzes the condensation of carbamoyl phosphate and aspartate to form carbamoyl aspartate and inorganic phosphate, the committed step in the de novo pyrimidine nucleotide biosynthesis pathway. This Chloroflexus aurantiacus (strain ATCC 29366 / DSM 635 / J-10-fl) protein is Aspartate carbamoyltransferase catalytic subunit.